Consider the following 20-residue polypeptide: Blooming-related protein 2 (20 aa).

Residues Val-1–Asp-20 form a disordered region.

Possible 'checkpoint' protein for cell division in the blooming process. This chain is Blooming-related protein 2, found in Prorocentrum triestinum (Red tide alga).